Reading from the N-terminus, the 126-residue chain is Large ribosomal subunit protein bL17 (126 aa).

This sequence belongs to the bacterial ribosomal protein bL17 family. Part of the 50S ribosomal subunit. Contacts protein L32.

The protein is Large ribosomal subunit protein bL17 of Rickettsia felis (strain ATCC VR-1525 / URRWXCal2) (Rickettsia azadi).